A 331-amino-acid chain; its full sequence is Ferredoxin--NADP reductase 2 (331 aa).

Residues E37, Q45, Y50, V90, F124, D286, and T327 each contribute to the FAD site.

This sequence belongs to the ferredoxin--NADP reductase type 2 family. Homodimer. It depends on FAD as a cofactor.

The enzyme catalyses 2 reduced [2Fe-2S]-[ferredoxin] + NADP(+) + H(+) = 2 oxidized [2Fe-2S]-[ferredoxin] + NADPH. This Listeria monocytogenes serovar 1/2a (strain ATCC BAA-679 / EGD-e) protein is Ferredoxin--NADP reductase 2.